A 128-amino-acid polypeptide reads, in one-letter code: MPERYAALLLVGAGGFVGATARFLVALVLPFIGTGFPFGTLAVNLAGCFLIGFISQLSVSSSLVSPELRLLLATGFCGGFTTFSSYMYEIMSLLRDGEIFYSTLYLLGSIVGGILCLYFGMQLAKLWA.

4 consecutive transmembrane segments (helical) span residues 1–21 (MPER…GATA), 45–65 (LAGC…SLVS), 70–90 (LLLA…MYEI), and 99–119 (IFYS…CLYF). Residues G78 and T81 each contribute to the Na(+) site.

Belongs to the fluoride channel Fluc/FEX (TC 1.A.43) family.

The protein localises to the cell inner membrane. It catalyses the reaction fluoride(in) = fluoride(out). Its activity is regulated as follows. Na(+) is not transported, but it plays an essential structural role and its presence is essential for fluoride channel function. Its function is as follows. Fluoride-specific ion channel. Important for reducing fluoride concentration in the cell, thus reducing its toxicity. The sequence is that of Fluoride-specific ion channel FluC from Chlorobium phaeobacteroides (strain BS1).